Here is a 135-residue protein sequence, read N- to C-terminus: uncharacterized protein (135 aa).

The segment at 1-70 is disordered; sequence MKPDWPRRGA…RWRPQGTGTG (70 aa).

This is an uncharacterized protein from Homo sapiens (Human).